The sequence spans 961 residues: DNA replication licensing factor MCM2 (961 aa).

Over residues 1 to 17 the composition is skewed to polar residues; it reads MDDSENNAPSTPGSPGF. 2 disordered regions span residues 1–81 and 120–220; these read MDDS…FNDN and AEAE…EEDE. The segment covering 39–78 has biased composition (acidic residues); the sequence is SDDDDDDVVGAEEAEVDPNVLPEDDGVVAAEEEEDGEDLF. Basic and acidic residues-rich tracts occupy residues 120–146 and 166–176; these read AEAE…LHDQ and PPREPRTPRSD. Residues 205–220 are compositionally biased toward acidic residues; sequence QTDDDPYEDEFDEEDE. Residues 380 to 406 form a C4-type zinc finger; that stretch reads CSKCGTVLGPFFQNSYTEVKVGSCPEC. An MCM domain is found at 524–730; it reads IGERIVKSIA…FTDEMLARFV (207 aa). Position 574-581 (574-581) interacts with ATP; the sequence is GDPGTAKS. Residues 706-709 carry the Arginine finger motif; sequence SRFD.

Belongs to the MCM family. As to quaternary structure, component of the minichromosome maintenance (MCM) complex, a heterotetramer composed of MCM2, MCM3, MCM4, MCM5, MCM6 and MCM7.

Its subcellular location is the nucleus. The enzyme catalyses ATP + H2O = ADP + phosphate + H(+). Its function is as follows. Probable component of the MCM2-7 complex (MCM complex) that may function as a DNA helicase and which is essential to undergo a single round of replication initiation and elongation per cell cycle in eukaryotic cells. This Oryza sativa subsp. indica (Rice) protein is DNA replication licensing factor MCM2.